The primary structure comprises 604 residues: Envelope glycoprotein E (604 aa).

Residues 1–24 (MRMTVVKHVMLTLICGTLSWGVQI) form the signal peptide. Topologically, residues 25–526 (NTLAYASAIK…NTFPFKTYAG (502 aa)) are virion surface. An N-linked (GlcNAc...) asparagine; by host glycan is attached at Asn-117. Residues 192–219 (CKLTPPSIQQVCIKHGACIHDVVVDVDC) form an interaction with gI region. N-linked (GlcNAc...) asparagine; by host glycosylation is found at Asn-249 and Asn-303. Cystine bridges form between Cys-370–Cys-396, Cys-379–Cys-388, and Cys-415–Cys-424. N-linked (GlcNAc...) asparagine; by host glycans are attached at residues Asn-419 and Asn-505. A helical transmembrane segment spans residues 527 to 544 (ITGGFAVLALVCLALALV). The Intravirion segment spans residues 545 to 604 (CTKRKFGHRSYWSDKAAYGQSTYYAGVPVDDFEDDTEVEVDEGAECGGSGYTVYIDKRTR). Positions 568–571 (YAGV) match the Internalization motif motif. Residues 574-586 (DDFEDDTEVEVDE) are acidic.

This sequence belongs to the alphaherpesvirinae glycoprotein E family. As to quaternary structure, interacts with gI. Post-translationally, phosphorylated within the acidic cluster. Phosphorylation determines whether endocytosed viral gE traffics to the trans-Golgi network or recycles to the cell membrane.

The protein localises to the virion membrane. The protein resides in the host cell membrane. It localises to the host cell junction. It is found in the host Golgi apparatus membrane. Its subcellular location is the host endosome membrane. In epithelial cells, the heterodimer gE/gI is required for the cell-to-cell spread of the virus, by sorting nascent virions to cell junctions. Once the virus reaches the cell junctions, virus particles can spread to adjacent cells extremely rapidly through interactions with cellular receptors that accumulate at these junctions. Implicated in basolateral spread in polarized cells. In neuronal cells, gE/gI is essential for the anterograde spread of the infection throughout the host nervous system. Together with US9, the heterodimer gE/gI is involved in the sorting and transport of viral structural components toward axon tips. The polypeptide is Envelope glycoprotein E (gE) (Cercopithecine herpesvirus 9 (strain DHV) (CeHV-9)).